The sequence spans 328 residues: Porphobilinogen deaminase (328 aa).

An S-(dipyrrolylmethanemethyl)cysteine modification is found at Cys245.

The protein belongs to the HMBS family. As to quaternary structure, monomer. Requires dipyrromethane as cofactor.

It carries out the reaction 4 porphobilinogen + H2O = hydroxymethylbilane + 4 NH4(+). It functions in the pathway porphyrin-containing compound metabolism; protoporphyrin-IX biosynthesis; coproporphyrinogen-III from 5-aminolevulinate: step 2/4. It participates in porphyrin-containing compound metabolism; chlorophyll biosynthesis. Its function is as follows. Tetrapolymerization of the monopyrrole PBG into the hydroxymethylbilane pre-uroporphyrinogen in several discrete steps. This Gloeobacter violaceus (strain ATCC 29082 / PCC 7421) protein is Porphobilinogen deaminase.